The chain runs to 83 residues: Protein L83L (83 aa).

Residues 1–26 (MDTSLKKNNGALEADNKNYQNYKDEP) are disordered.

The protein belongs to the asfivirus L83L family. Interacts with host IL1B.

It is found in the host cytoplasm. Functionally, may subvert the host innate immune response by interacting with host IL1B and interfering with its function. The sequence is that of Protein L83L from Ornithodoros (relapsing fever ticks).